The following is a 204-amino-acid chain: ATP phosphoribosyltransferase (204 aa).

The protein belongs to the ATP phosphoribosyltransferase family. Short subfamily. In terms of assembly, heteromultimer composed of HisG and HisZ subunits.

It is found in the cytoplasm. The catalysed reaction is 1-(5-phospho-beta-D-ribosyl)-ATP + diphosphate = 5-phospho-alpha-D-ribose 1-diphosphate + ATP. The protein operates within amino-acid biosynthesis; L-histidine biosynthesis; L-histidine from 5-phospho-alpha-D-ribose 1-diphosphate: step 1/9. Catalyzes the condensation of ATP and 5-phosphoribose 1-diphosphate to form N'-(5'-phosphoribosyl)-ATP (PR-ATP). Has a crucial role in the pathway because the rate of histidine biosynthesis seems to be controlled primarily by regulation of HisG enzymatic activity. The protein is ATP phosphoribosyltransferase of Staphylococcus aureus (strain USA300).